The following is a 294-amino-acid chain: ADP-ribosyl-[dinitrogen reductase] glycohydrolase (294 aa).

ADP-D-ribose-binding positions include 100–102, glutamate 121, histidine 158, and tyrosine 212; that span reads NTC. Aspartate 243, aspartate 245, and threonine 246 together coordinate Mn(2+).

This sequence belongs to the ADP-ribosylglycohydrolase family. In terms of assembly, monomer. Requires Mn(2+) as cofactor.

It is found in the cytoplasm. The catalysed reaction is N(omega)-alpha-(ADP-D-ribosyl)-L-arginyl-[dinitrogen reductase] + H2O = L-arginyl-[dinitrogen reductase] + ADP-D-ribose. Its function is as follows. Involved in the regulation of nitrogen fixation activity by the reversible ADP-ribosylation of one subunit of the homodimeric dinitrogenase reductase component of the nitrogenase enzyme complex. The ADP-ribosyltransferase (DraT) transfers the ADP-ribose group from NAD to dinitrogenase reductase. The ADP-ribose group is removed through the action of the ADP-ribosylglycohydrolase (DraG, this entry). This chain is ADP-ribosyl-[dinitrogen reductase] glycohydrolase, found in Rhodospirillum rubrum.